The primary structure comprises 154 residues: Ribonuclease H (154 aa).

In terms of domain architecture, RNase H type-1 spans 1–142; it reads MTKQVEIFTD…CDELARQGAN (142 aa). The Mg(2+) site is built by aspartate 10, glutamate 48, aspartate 70, and aspartate 134.

Belongs to the RNase H family. In terms of assembly, monomer. The cofactor is Mg(2+).

Its subcellular location is the cytoplasm. It catalyses the reaction Endonucleolytic cleavage to 5'-phosphomonoester.. In terms of biological role, endonuclease that specifically degrades the RNA of RNA-DNA hybrids. This is Ribonuclease H from Yersinia pestis bv. Antiqua (strain Antiqua).